The following is a 272-amino-acid chain: Undecaprenyl-diphosphatase (272 aa).

7 consecutive transmembrane segments (helical) span residues 22 to 42 (FLPVSSTGHMIIVGHMLGFTG), 45 to 65 (AETFEVIIQLGSILAVVVVFW), 92 to 112 (SHIILAMLPAVTLGLMFHDVI), 118 to 138 (PQSVMYALVIGGVLLITAEIL), 189 to 209 (YTASEFSFILAVPMMMGASGL), 228 to 248 (VGFVTAFVVALVAIKTFLALI), and 251 to 271 (ISFIPFAIYRFIVAAAVYWVF).

Belongs to the UppP family.

The protein localises to the cell inner membrane. The catalysed reaction is di-trans,octa-cis-undecaprenyl diphosphate + H2O = di-trans,octa-cis-undecaprenyl phosphate + phosphate + H(+). In terms of biological role, catalyzes the dephosphorylation of undecaprenyl diphosphate (UPP). Confers resistance to bacitracin. This chain is Undecaprenyl-diphosphatase, found in Photorhabdus laumondii subsp. laumondii (strain DSM 15139 / CIP 105565 / TT01) (Photorhabdus luminescens subsp. laumondii).